Here is a 615-residue protein sequence, read N- to C-terminus: MFS-type transporter 1 (615 aa).

A disordered region spans residues 1–85; that stretch reads MTALAAVPDL…GNNVSPHGRH (85 aa). A compositionally biased stretch (polar residues) spans 16-53; sequence PSTTTVHSPNYSGSPADISSSPTTRAVSRNTARQTASA. Asparagine 25 is a glycosylation site (N-linked (GlcNAc...) asparagine). 6 consecutive transmembrane segments (helical) span residues 94–114, 138–158, 162–182, 192–212, 222–242, and 251–271; these read CLVI…SGIL, VYSL…HIIG, VWIT…RSAT, VLGV…TNGF, FAFQ…LGGI, and FGFY…LVVL. Residue asparagine 302 is glycosylated (N-linked (GlcNAc...) asparagine). 8 helical membrane passes run 320–340, 351–371, 397–417, 432–452, 455–475, 488–508, 522–542, and 585–605; these read WTGT…FSVV, QNIA…LWVG, AAVF…ALYF, FLPM…LVET, VRWL…IMAL, FAML…NLII, AVFN…TAVV, and AAFW…FLGL.

It belongs to the major facilitator superfamily. EmrB family.

Its subcellular location is the membrane. MFS-type transporter; part of the gene cluster that mediates the biosynthesis of pyriculol and pyriculariol, two heptaketides that induce lesion formation upon application on rice leaves but are dispensable for pathogenicity. With the ABC transporter ABC7, is most likely responsible for pyriculol and pyriculariol secretion and thereby may contribute to intrinsic resistance. The chain is MFS-type transporter 1 from Pyricularia oryzae (strain 70-15 / ATCC MYA-4617 / FGSC 8958) (Rice blast fungus).